A 67-amino-acid polypeptide reads, in one-letter code: Large ribosomal subunit protein uL29 (67 aa).

It belongs to the universal ribosomal protein uL29 family.

This Methanosarcina acetivorans (strain ATCC 35395 / DSM 2834 / JCM 12185 / C2A) protein is Large ribosomal subunit protein uL29.